The primary structure comprises 389 residues: Cytochrome b (389 aa).

The next 4 helical transmembrane spans lie at 32–52, 76–98, 113–133, and 179–199; these read FGSLLALCLIIQILTGCFLAM, YILRYTHANVASFFFIFIYVHIG, LWSIGVIILVLMMAIGFLGYV, and FFSLHYILPFVLAALAVAHMI. Residues histidine 82 and histidine 96 each coordinate heme b. 2 residues coordinate heme b: histidine 183 and histidine 197. Residue histidine 202 coordinates a ubiquinone. 4 consecutive transmembrane segments (helical) span residues 225–245, 289–309, 322–342, and 349–369; these read FIFKDLVTIFAFFLVLSIIVF, LLGVLAMFGSLLILLIMPFVD, INMVFFTIFVCNFITLGLVGA, and FIFLGQVCTTIYFAYFFVIVP.

The protein belongs to the cytochrome b family. As to quaternary structure, fungal cytochrome b-c1 complex contains 10 subunits; 3 respiratory subunits, 2 core proteins and 5 low-molecular weight proteins. Cytochrome b-c1 complex is a homodimer. The cofactor is heme b.

Its subcellular location is the mitochondrion inner membrane. Its function is as follows. Component of the ubiquinol-cytochrome c reductase complex (complex III or cytochrome b-c1 complex) that is part of the mitochondrial respiratory chain. The b-c1 complex mediates electron transfer from ubiquinol to cytochrome c. Contributes to the generation of a proton gradient across the mitochondrial membrane that is then used for ATP synthesis. This is Cytochrome b (COB) from Mycena viridimarginata.